The sequence spans 375 residues: Mitogen-activated protein kinase 1 (375 aa).

The region spanning 43 to 329 (RPPIMPIGRG…VEEALAHPYL (287 aa)) is the Protein kinase domain. ATP is bound by residues 49–57 (IGRGAYGIV) and lysine 72. The active-site Proton acceptor is the aspartate 169. Phosphothreonine is present on threonine 201. A TXY motif is present at residues 201–203 (TEY). Tyrosine 203 is modified (phosphotyrosine). At threonine 206 the chain carries Phosphothreonine.

It belongs to the protein kinase superfamily. CMGC Ser/Thr protein kinase family. MAP kinase subfamily. Requires Mg(2+) as cofactor. Post-translationally, activated by wounding and UV-C in a cultivar-dependent manner; phosphorylated in cv. Pungchon but not in cv. Subicho.

It carries out the reaction L-seryl-[protein] + ATP = O-phospho-L-seryl-[protein] + ADP + H(+). The catalysed reaction is L-threonyl-[protein] + ATP = O-phospho-L-threonyl-[protein] + ADP + H(+). Its activity is regulated as follows. Activated by threonine and tyrosine phosphorylation. Stress-inducible protein kinase involved in oxidative stress-mediated and innate immune MAP kinase signaling cascades. In Capsicum annuum (Capsicum pepper), this protein is Mitogen-activated protein kinase 1.